A 506-amino-acid chain; its full sequence is 5-OH-xanthotoxin synthase (506 aa).

A helical transmembrane segment spans residues 3–23 (PVVIFLVLAFPIASVYLLFYH). The interval 365-370 (TGPLLI) is substrate specificity. Cys-446 serves as a coordination point for heme.

Belongs to the cytochrome P450 family. Heme is required as a cofactor.

The protein resides in the microsome membrane. The catalysed reaction is xanthotoxin + reduced [NADPH--hemoprotein reductase] + O2 = 5-hydroxyxanthotoxin + oxidized [NADPH--hemoprotein reductase] + H2O + 2 H(+). It participates in secondary metabolite biosynthesis. Functionally, involved in the biosynthesis of coumarins and furanocoumarins (FCs), natural products required for defense responses against attacks by predators with potential medical and agroindustrial usages such as anticoagulant, rodenticide and artificial vanilla substitutes. Catalyzes the conversion of xanthotoxin into 5-hydroxyxanthotoxin. In Pastinaca sativa (Wild parsnip), this protein is 5-OH-xanthotoxin synthase.